The primary structure comprises 339 residues: MDPVQSHGSQSSLPPPFHARDFQLHLQQQQQHQQQHQQQQQQQFFLHHHQQPQRNLDQDHEQQGGSILNRSIKMDREETSDNMDNIANTNSGSEGKEMSLHGGEGGSGGGGSGEQMTRRPRGRPAGSKNKPKAPIIITRDSANALRTHVMEIGDGCDIVDCMATFARRRQRGVCVMSGTGSVTNVTIRQPGSPPGSVVSLHGRFEILSLSGSFLPPPAPPAATGLSVYLAGGQGQVVGGSVVGPLLCSGPVVVMAASFSNAAYERLPLEEDEMQTPVQGGGGGGGGGGGMGSPPMMGQQQAMAAMAAAQGLPPNLLGSVQLPPPQQNDQQYWSTGRPPY.

Residues 1–12 (MDPVQSHGSQSS) show a composition bias toward polar residues. Disordered regions lie at residues 1–132 (MDPV…NKPK) and 273–339 (MQTP…RPPY). Over residues 24-45 (LHLQQQQQHQQQHQQQQQQQFF) the composition is skewed to low complexity. Residues 82–93 (NMDNIANTNSGS) are compositionally biased toward polar residues. Over residues 102–113 (GGEGGSGGGGSG) the composition is skewed to gly residues. The a.T hook DNA-binding region spans 118–130 (RRPRGRPAGSKNK). Positions 142-279 (ANALRTHVME…EDEMQTPVQG (138 aa)) constitute a PPC domain. Positions 278-291 (QGGGGGGGGGGGMG) are enriched in gly residues. Over residues 292–310 (SPPMMGQQQAMAAMAAAQG) the composition is skewed to low complexity.

Its subcellular location is the nucleus. In terms of biological role, transcription factor that specifically binds AT-rich DNA sequences related to the nuclear matrix attachment regions (MARs). This chain is AT-hook motif nuclear-localized protein 26, found in Arabidopsis thaliana (Mouse-ear cress).